Here is a 385-residue protein sequence, read N- to C-terminus: MSPHLPQFTNISRIYPFTHTPIECYFNTSPRDFVIKEIPLYEPSGSGEHLLLYVRKKGLSTFELLNILSSSLGCRVRDIGYAGLKDKAATSYQYLSIHRSLQNRLESALPHLHSQHIKILTITPHNHKLKIGHLKGNSFFMRLKKVSSNNATKLHSTLELLAHSGFPNYFGNQRFGKEGDNFQSGKAISEHKLTLKNKKISNFLISSYQSHLFNAWLSSRIQLAQILRSFKPNEVLRALQSPNFPTLHTFAKSCTPQLIKTLQSQKQPFVILQGDIMCHYPFGKNFVCDDTLIESTRFLQKDIAPTGALCGTKFTHSKCLAYDIEEQFLDSQIKANGTRRYAWVWAENIEGRYIPQEAHFELHFHLPKGSYATIFLESLLSTHNC.

Asp86 (nucleophile) is an active-site residue. In terms of domain architecture, TRUD spans 165-305; sequence GFPNYFGNQR…TRFLQKDIAP (141 aa).

Belongs to the pseudouridine synthase TruD family.

It carries out the reaction uridine(13) in tRNA = pseudouridine(13) in tRNA. Responsible for synthesis of pseudouridine from uracil-13 in transfer RNAs. This is tRNA pseudouridine synthase D from Helicobacter hepaticus (strain ATCC 51449 / 3B1).